A 225-amino-acid chain; its full sequence is Suppressor of cytokine signaling 3 (225 aa).

The interval 22–33 (LKTFSSKSEYQL) is kinase inhibitory region (KIR). The interval 34-45 (VVNAVRKLQESG) is extended SH2 subdomain (ESS). The region spanning 46 to 142 (FYWSAVTGGE…APSFSLPPTE (97 aa)) is the SH2 domain. The interval 141-160 (TEPSFEVQEQPPAQALPGGT) is disordered. Residues 177–224 (VLSRPLSSNVATLQHLCRKTVNGHLDSYEKVTQLPGPIREFLDQYDAP) enclose the SOCS box domain.

As to quaternary structure, interacts with multiple activated proteins of the tyrosine kinase signaling pathway including IGF1 receptor, insulin receptor and JAK2. Binding to JAK2 is mediated through the KIR and SH2 domains to a phosphorylated tyrosine residue within the JAK2 JH1 domain. Binds specific activated tyrosine residues of the leptin, EPO, IL12, GSCF and gp130 receptors. Interaction with CSNK1E stabilize SOCS3 protein. Component of the probable ECS(SOCS3) E3 ubiquitin-protein ligase complex which contains CUL5, RNF7/RBX2, Elongin BC complex and SOCS3. Interacts with CUL5, RNF7, ELOB and ELOC. Interacts with FGFR3. Interacts with INSR. Interacts with BCL10; this interaction may interfere with BCL10-binding with PELI2. Interacts with NOD2 (via CARD domain); the interaction promotes NOD2 degradation. Post-translationally, phosphorylated on tyrosine residues after stimulation by the cytokines, IL-2, EPO or IGF1.

Its pathway is protein modification; protein ubiquitination. Functionally, SOCS family proteins form part of a classical negative feedback system that regulates cytokine signal transduction. SOCS3 is involved in negative regulation of cytokines that signal through the JAK/STAT pathway. Inhibits cytokine signal transduction by binding to tyrosine kinase receptors including IL6ST/gp130, LIF, erythropoietin, insulin, IL12, GCSF and leptin receptors. Binding to JAK2 inhibits its kinase activity and regulates IL6 signaling. Suppresses fetal liver erythropoiesis. Regulates onset and maintenance of allergic responses mediated by T-helper type 2 cells. Probable substrate recognition component of a SCF-like ECS (Elongin BC-CUL2/5-SOCS-box protein) E3 ubiquitin-protein ligase complex which mediates the ubiquitination and subsequent proteasomal degradation of target proteins. The sequence is that of Suppressor of cytokine signaling 3 from Rattus norvegicus (Rat).